Here is a 255-residue protein sequence, read N- to C-terminus: Large ribosomal subunit protein uL4 (255 aa).

The protein belongs to the universal ribosomal protein uL4 family. Part of the 50S ribosomal subunit.

One of the primary rRNA binding proteins, this protein initially binds near the 5'-end of the 23S rRNA. It is important during the early stages of 50S assembly. It makes multiple contacts with different domains of the 23S rRNA in the assembled 50S subunit and ribosome. Its function is as follows. Forms part of the polypeptide exit tunnel. This is Large ribosomal subunit protein uL4 from Pyrococcus horikoshii (strain ATCC 700860 / DSM 12428 / JCM 9974 / NBRC 100139 / OT-3).